We begin with the raw amino-acid sequence, 157 residues long: Crossover junction endodeoxyribonuclease RuvC (157 aa).

Residues aspartate 7, glutamate 67, and aspartate 140 contribute to the active site. Positions 7, 67, and 140 each coordinate Mg(2+).

This sequence belongs to the RuvC family. Homodimer which binds Holliday junction (HJ) DNA. The HJ becomes 2-fold symmetrical on binding to RuvC with unstacked arms; it has a different conformation from HJ DNA in complex with RuvA. In the full resolvosome a probable DNA-RuvA(4)-RuvB(12)-RuvC(2) complex forms which resolves the HJ. It depends on Mg(2+) as a cofactor.

It localises to the cytoplasm. The catalysed reaction is Endonucleolytic cleavage at a junction such as a reciprocal single-stranded crossover between two homologous DNA duplexes (Holliday junction).. The RuvA-RuvB-RuvC complex processes Holliday junction (HJ) DNA during genetic recombination and DNA repair. Endonuclease that resolves HJ intermediates. Cleaves cruciform DNA by making single-stranded nicks across the HJ at symmetrical positions within the homologous arms, yielding a 5'-phosphate and a 3'-hydroxyl group; requires a central core of homology in the junction. The consensus cleavage sequence is 5'-(A/T)TT(C/G)-3'. Cleavage occurs on the 3'-side of the TT dinucleotide at the point of strand exchange. HJ branch migration catalyzed by RuvA-RuvB allows RuvC to scan DNA until it finds its consensus sequence, where it cleaves and resolves the cruciform DNA. The protein is Crossover junction endodeoxyribonuclease RuvC of Rickettsia bellii (strain RML369-C).